The sequence spans 292 residues: Elongation factor Ts (292 aa).

The involved in Mg(2+) ion dislocation from EF-Tu stretch occupies residues threonine 79–valine 82.

It belongs to the EF-Ts family.

The protein resides in the cytoplasm. Its function is as follows. Associates with the EF-Tu.GDP complex and induces the exchange of GDP to GTP. It remains bound to the aminoacyl-tRNA.EF-Tu.GTP complex up to the GTP hydrolysis stage on the ribosome. The polypeptide is Elongation factor Ts (tsf) (Idiomarina loihiensis (strain ATCC BAA-735 / DSM 15497 / L2-TR)).